Reading from the N-terminus, the 965-residue chain is MDRGLSTGTNQSGAGLRERAVTSQADLNVITENPTVTNASNGKDKAGKTFGRTPDGTVFTVPQTHDMVSQLLSPSEPKNLSDLVVLTILAGHIFLLWILPSGAKIPVFAVIYLFWRSCYNAGIGWLLHNQSHHKTLVRWAEKSQIFVNPATGKNPYPQLYHLIKRELEIKISKDYSFEEAPLEYNTWLVFRRLVDLILMCDFASYCLFAIACSRHPANESVLMTVIRWTSGIALVLFNLWVKLDAHRVVKDYAWYWGDFFYLIDQELTFDGVFEMAPHPMYSVGYAGYYGISLMAASYKVLFISIIAHAAQFAFLVLVENPHIDKTYNPPPPRKRTITEHDAASQRSQSPDTPNAPSVSEENVPNATTFSSPPPAVHNLLGFHNLDLHRITDTSSILVQFLMFSLTVLTPSTPWYQFLFVANAAIWRLWYSVGIGYLLNRQSNCKSWTRHFVKYGETPHEAWNQWKGTYHLSMVMCYASFISAVWKMYTLPSNWGYGLAILRHVLGAGLISLQIWTSVSIYESLGEFGWFYGDFFFDESPKLTYNGIYRFLNNPERVLGLAGVWGAVLITASGTVAFLAFLSHILSLGFIQFVERPHMQKLYGRSLRQDAGLVKSLKRSLPPSLRQLHGSVDKIFDESYEFIEEIIDTARPKLAAGVNTFVRDTTALFQKYPARVTISRIDADLAGYDLRDYSLTVEASQLPLDEGDLSKEGDNARTPLDRRGDLENLVFPYGTPVKVKWTAPLNHSKKDWIGLYKVTDNTSREVTRVSSQGRWVAVNEGFYDNLTCERGILISDVVVSTSQGDNGEKHDIATGEVVFSGDKLFWTQGVFEFRYHHNGKHNVMAISRPFEVRIPRFEEEDHFDMSQTAVETSLLPVIQNCFDRDPEIAPETPEEQYGSLVERDGKFAKRVVFAVHQMFGVEFAPEVVRSDGNVRNLAWRICNAKRVLAPYSMSRDGATTPTESKE.

Residues 1–82 (MDRGLSTGTN…SPSEPKNLSD (82 aa)) are Lumenal-facing. The disordered stretch occupies residues 34–54 (PTVTNASNGKDKAGKTFGRTP). The helical transmembrane segment at 83-103 (LVVLTILAGHIFLLWILPSGA) threads the bilayer. Residues 104–106 (KIP) lie on the Cytoplasmic side of the membrane. Residues 107–127 (VFAVIYLFWRSCYNAGIGWLL) form a helical membrane-spanning segment. At 128 to 192 (HNQSHHKTLV…EYNTWLVFRR (65 aa)) the chain is on the lumenal side. A helical transmembrane segment spans residues 193-213 (LVDLILMCDFASYCLFAIACS). At 214-220 (RHPANES) the chain is on the cytoplasmic side. The chain crosses the membrane as a helical span at residues 221-241 (VLMTVIRWTSGIALVLFNLWV). Residues 242 to 274 (KLDAHRVVKDYAWYWGDFFYLIDQELTFDGVFE) lie on the Lumenal side of the membrane. The chain crosses the membrane as a helical span at residues 275–295 (MAPHPMYSVGYAGYYGISLMA). Residues 296–297 (AS) are Cytoplasmic-facing. A helical transmembrane segment spans residues 298-318 (YKVLFISIIAHAAQFAFLVLV). Residues 319–394 (ENPHIDKTYN…LDLHRITDTS (76 aa)) are Lumenal-facing. The disordered stretch occupies residues 326–368 (TYNPPPPRKRTITEHDAASQRSQSPDTPNAPSVSEENVPNATT). Over residues 344–368 (SQRSQSPDTPNAPSVSEENVPNATT) the composition is skewed to polar residues. A helical membrane pass occupies residues 395–415 (SILVQFLMFSLTVLTPSTPWY). A topological domain (cytoplasmic) is located at residue Q416. A helical membrane pass occupies residues 417–437 (FLFVANAAIWRLWYSVGIGYL). Topologically, residues 438–470 (LNRQSNCKSWTRHFVKYGETPHEAWNQWKGTYH) are lumenal. Residues 471-491 (LSMVMCYASFISAVWKMYTLP) traverse the membrane as a helical segment. The Cytoplasmic portion of the chain corresponds to 492 to 503 (SNWGYGLAILRH). The helical transmembrane segment at 504–524 (VLGAGLISLQIWTSVSIYESL) threads the bilayer. Topologically, residues 525 to 559 (GEFGWFYGDFFFDESPKLTYNGIYRFLNNPERVLG) are lumenal. The chain crosses the membrane as a helical span at residues 560 to 580 (LAGVWGAVLITASGTVAFLAF). Residues 581–965 (LSHILSLGFI…GATTPTESKE (385 aa)) are Cytoplasmic-facing.

The protein belongs to the class VI-like SAM-binding methyltransferase superfamily. CHO2 family.

It is found in the endoplasmic reticulum membrane. It catalyses the reaction a 1,2-diacyl-sn-glycero-3-phosphoethanolamine + S-adenosyl-L-methionine = a 1,2-diacyl-sn-glycero-3-phospho-N-methylethanolamine + S-adenosyl-L-homocysteine + H(+). It functions in the pathway phospholipid metabolism; phosphatidylcholine biosynthesis. Its function is as follows. Catalyzes the first step of the methylation pathway of phosphatidylcholine biosynthesis, the SAM-dependent methylation of phosphatidylethanolamine (PE) to phosphatidylmonomethylethanolamine (PMME). The chain is Phosphatidylethanolamine N-methyltransferase from Emericella nidulans (strain FGSC A4 / ATCC 38163 / CBS 112.46 / NRRL 194 / M139) (Aspergillus nidulans).